The chain runs to 251 residues: 3-isopropylmalate dehydratase small subunit 1 (251 aa).

The transit peptide at 1-59 (MAASLQSANPTLSRTLASPNKPSSFATFRSPFLRFNSTSVASNFKPLVSREASSSFVTR) directs the protein to the chloroplast.

Belongs to the LeuD family. In terms of assembly, heterodimer of the large LEUC/IIL1 subunit and the small LEUD (SSU1, SSU2 or SSU3) subunits. In terms of tissue distribution, expressed at low levels in roots, root tips, at the basis of the hypocotyls, and in emerging leaves. In young seedlings, expressed in cotyledon epidermal cells. In hypocotyls, expressed in peripheral cells. In seedling roots, expressed in the epidermis, including root hairs, and throughout the cortex. In rosette leaves, expressed in the upper and lower epidermis. In roots of adult plants, expressed in the root tips and cortex of the mature root enclosing the stele. In flowering stalks, expressed in the epidermis. Expressed in the carpel epidermis.

The protein localises to the plastid. It localises to the chloroplast stroma. It catalyses the reaction (2R,3S)-3-isopropylmalate = (2S)-2-isopropylmalate. Its pathway is amino-acid biosynthesis; L-leucine biosynthesis; L-leucine from 3-methyl-2-oxobutanoate: step 2/4. Functionally, catalyzes the isomerization between 2-isopropylmalate and 3-isopropylmalate, via the formation of 2-isopropylmaleate. Plays an essential role in leucine biosynthesis. Functions in both the biosynthesis of leucine, and in the methionine chain elongation pathway of aliphatic glucosinolate formation. Plays an essential role in female gametophyte development. The protein is 3-isopropylmalate dehydratase small subunit 1 of Arabidopsis thaliana (Mouse-ear cress).